A 435-amino-acid chain; its full sequence is Cell adhesion molecule 2 (435 aa).

An N-terminal signal peptide occupies residues M1–G24. The Extracellular segment spans residues Q25 to H367. Residues P27–T119 form the Ig-like V-type domain. N-linked (GlcNAc...) asparagine glycans are attached at residues N31 and N51. Cystine bridges form between C44-C104, C146-C203, and C248-C296. Ig-like C2-type domains lie at P127 to Q219 and P227 to I312. An N-linked (GlcNAc...) asparagine glycan is attached at N291. Over residues S337–S351 the composition is skewed to low complexity. A disordered region spans residues S337–A360. A helical transmembrane segment spans residues A368 to L388. Topologically, residues G389 to I435 are cytoplasmic. Residue S423 is modified to Phosphoserine.

Belongs to the nectin family. Glycosylation at Asn-51 reduces adhesive binding.

The protein resides in the cell membrane. It localises to the synapse. Its subcellular location is the cell projection. The protein localises to the axon. Its function is as follows. Adhesion molecule that engages in homo- and heterophilic interactions with the other nectin-like family members, leading to cell aggregation. Important for synapse organization, providing regulated trans-synaptic adhesion. Preferentially binds to oligodendrocytes. This is Cell adhesion molecule 2 (Cadm2) from Mus musculus (Mouse).